The primary structure comprises 317 residues: UV DNA damage endonuclease (317 aa).

The protein belongs to the uve1/UvsE family.

Functionally, component in a DNA repair pathway. Removal of UV LIGHT damaged nucleotides. Recognizes pyrimidine dimers and cleave a phosphodiester bond immediately 5' to the lesion. This chain is UV DNA damage endonuclease, found in Bacillus cereus (strain G9842).